Consider the following 199-residue polypeptide: MAAAGSLCQTAWRVRGWLAAGLCALLAGCASVPDAPSGTAEGAFSRGGRFAITMTESSGEQQAVQGGFTWRDDGRRYQLDLTNPLGSTEARVEGRPGHATLTKADGTVLQADTPDALVEEALGSPVPVSGLRDWLRGRVADDAPAGKLQSDAQGRPLSFEQDGWQARLSRYDDQGPGLLVLQRTEPGRRIVVRLAVSQP.

The first 28 residues, 1–28 (MAAAGSLCQTAWRVRGWLAAGLCALLAG), serve as a signal peptide directing secretion. Cys29 carries the N-palmitoyl cysteine lipid modification. Cys29 carries S-diacylglycerol cysteine lipidation.

This sequence belongs to the LolB family. As to quaternary structure, monomer.

The protein resides in the cell outer membrane. Plays a critical role in the incorporation of lipoproteins in the outer membrane after they are released by the LolA protein. The sequence is that of Outer-membrane lipoprotein LolB from Bordetella petrii (strain ATCC BAA-461 / DSM 12804 / CCUG 43448).